Consider the following 523-residue polypeptide: Frizzled-2 (523 aa).

Positions 1 to 120 (PDHGFCQPIS…HGAEQICVGQ (120 aa)) constitute an FZ domain. Residues 1 to 205 (PDHGFCQPIS…EDEIRFARVW (205 aa)) are Extracellular-facing. Cystine bridges form between C6-C67, C14-C60, C51-C88, C77-C117, and C81-C105. N20 carries an N-linked (GlcNAc...) asparagine glycan. N121 carries N-linked (GlcNAc...) asparagine glycosylation. The chain crosses the membrane as a helical span at residues 206-226 (ILVWSVLCCASTFFTVTTYLV). Residues 227-237 (DMQRFRYPERP) lie on the Cytoplasmic side of the membrane. The chain crosses the membrane as a helical span at residues 238–258 (IIFLSGCYTMVSVAYIAGFVL). Topologically, residues 259–285 (EERVVCNERFQEDGYRTVVQGTKKEGC) are extracellular. Residues 286-306 (TILFMMLYFFSMASSIWWVIL) traverse the membrane as a helical segment. Over 307–328 (SLTWFLAAGMKWGHEAIEANSQ) the chain is Cytoplasmic. The chain crosses the membrane as a helical span at residues 329–349 (YFHLAAWAVPAVKTITILAMG). The Extracellular segment spans residues 350–372 (QIDGDLLSGVCFVGLNGIDPLRG). The helical transmembrane segment at 373–393 (FVLAPLFVYLFIGTSFLLAGF) threads the bilayer. The Cytoplasmic portion of the chain corresponds to 394 to 419 (VSLFRIRTIMKHGGTKTEKLERLMVR). The chain crosses the membrane as a helical span at residues 420–440 (IGVFSVLYTVPATIVIACYFY). The Extracellular portion of the chain corresponds to 441-477 (EQAFRQHWERSWISQHCKSLAIPCPLHFTPRMTPDFT). A helical transmembrane segment spans residues 478–498 (VYMIKYLMTLIVGITSGFWIF). Residues 499 to 523 (SGKTLHSWRKFYTRLTNSRQGETTV) lie on the Cytoplasmic side of the membrane. A Lys-Thr-X-X-X-Trp motif, mediates interaction with the PDZ domain of Dvl family members motif is present at residues 501 to 506 (KTLHSW). The PDZ-binding signature appears at 521–523 (TTV).

It belongs to the G-protein coupled receptor Fz/Smo family. In terms of tissue distribution, expressed in the developing head and limbs. Expressed broadly in cranial ectoderm. Also expressed in the developing somites (dermomyotome) and in other cranial placodes, including the olfactory, lens, and otic placodes (rostral rim of the vesicle).

It localises to the membrane. The protein resides in the cell membrane. Receptor for Wnt proteins. Most of frizzled receptors are coupled to the beta-catenin canonical signaling pathway, which leads to the activation of disheveled proteins, inhibition of GSK-3 kinase, nuclear accumulation of beta-catenin and activation of Wnt target genes. A second signaling pathway involving PKC and calcium fluxes has been seen for some family members, but it is not yet clear if it represents a distinct pathway or if it can be integrated in the canonical pathway, as PKC seems to be required for Wnt-mediated inactivation of GSK-3 kinase. Both pathways seem to involve interactions with G-proteins. May be involved in transduction and intercellular transmission of polarity information during tissue morphogenesis and/or in differentiated tissues. This Gallus gallus (Chicken) protein is Frizzled-2 (FZD2).